The following is a 396-amino-acid chain: MTKSEKIIELTNHYGAHNYLPLPIVISEAEGVWVKDPEGNKYMDMLSAYSAVNQGHRHPKIIQALKDQADKVTLVSRAFHSDNLGEWYEKICKLAGKDKALPMNTGAEAVETALKAARRWAYDVKGIEPNKAEIIAFNGNFHGRTMAPVSLSSEAEYQRGYGPLLDGFRKVDFGDVDALKAAINKNTAAVLVEPIQGEAGINIPPEGYLKAIRELCDEHNVLFIADEIQAGLGRSGKLFARDWDNVKPDVYILGKALGGGVFPISVVLADKEVLDVFTPGSHGSTFGGNPLACAASIAALDVIVDEDLPGRSLELGDYFKEQLKQIDHPSIKEVRGRGLFIGVELNESARPYCEALKEEGLLCKETHDTVIRFAPPLIITKEELDLALEKIRHVFQ.

K255 carries the post-translational modification N6-(pyridoxal phosphate)lysine.

The protein belongs to the class-III pyridoxal-phosphate-dependent aminotransferase family. OAT subfamily. Requires pyridoxal 5'-phosphate as cofactor.

Its subcellular location is the cytoplasm. It catalyses the reaction a 2-oxocarboxylate + L-ornithine = L-glutamate 5-semialdehyde + an L-alpha-amino acid. It participates in amino-acid biosynthesis; L-proline biosynthesis; L-glutamate 5-semialdehyde from L-ornithine: step 1/1. Functionally, catalyzes the interconversion of ornithine to glutamate semialdehyde. The protein is Ornithine aminotransferase 2 of Staphylococcus aureus (strain MRSA252).